We begin with the raw amino-acid sequence, 400 residues long: MHRVIFLVDMNAFFISCESTRHPEIIGKPAAVAGDPKNRSGIILTANYEARKFGVKTTMVLHKVLKLCPNIIIIPPDHCFYKQKSKEVMGILSKYTPVIEKNSIDEAWLDMTGCERIFGRSYQTAECIMKHINSELGLDCSIGISENKFLAKMASQMKKPLGITKLWKKDIELKLWPLPVEFMNGIGKQTARKLREMKIKTIGELANFDRRYLIKKLGKVGAEIHQFANGIDVSPVTPHSHKDVKSIGKSITLAHDISDIESAKVILMELSDKVGMTARKYNKKGHTVQINIKYSNFQSITRQRTITETYLVKEIYSAGIEMLEKNWNERLPVRLLGISLSGFSKYNEDEQISMFNMLEIDNEKSSVRKIDKIEAAIDSIRKKYGDSIIKSGSLIKKSKN.

The region spanning 5-187 is the UmuC domain; sequence IFLVDMNAFF…LPVEFMNGIG (183 aa). Residues D9 and D105 each contribute to the Mg(2+) site. E106 is a catalytic residue.

It belongs to the DNA polymerase type-Y family. In terms of assembly, monomer. Requires Mg(2+) as cofactor.

It localises to the cytoplasm. The enzyme catalyses DNA(n) + a 2'-deoxyribonucleoside 5'-triphosphate = DNA(n+1) + diphosphate. Poorly processive, error-prone DNA polymerase involved in untargeted mutagenesis. Copies undamaged DNA at stalled replication forks, which arise in vivo from mismatched or misaligned primer ends. These misaligned primers can be extended by PolIV. Exhibits no 3'-5' exonuclease (proofreading) activity. May be involved in translesional synthesis, in conjunction with the beta clamp from PolIII. In Clostridium kluyveri (strain ATCC 8527 / DSM 555 / NBRC 12016 / NCIMB 10680 / K1), this protein is DNA polymerase IV.